A 30-amino-acid chain; its full sequence is Photosystem I reaction center subunit XII (30 aa).

Residues 7-29 traverse the membrane as a helical segment; it reads VYIALMAALLASVLAIRLGATLY.

The protein belongs to the PsaM family.

The protein resides in the plastid. Its subcellular location is the chloroplast thylakoid membrane. This is Photosystem I reaction center subunit XII from Thalassiosira pseudonana (Marine diatom).